A 103-amino-acid polypeptide reads, in one-letter code: uncharacterized protein (103 aa).

Residues 1–10 (MVVKKSKPKN) show a composition bias toward basic residues. Disordered stretches follow at residues 1–38 (MVVK…KGKK) and 77–103 (AVFS…NEKK).

This is an uncharacterized protein from Schizosaccharomyces pombe (strain 972 / ATCC 24843) (Fission yeast).